We begin with the raw amino-acid sequence, 518 residues long: Protein nucleotidyltransferase YdiU (518 aa).

ATP contacts are provided by G100, G102, R103, K123, D135, G136, R193, and R200. Residue D270 is the Proton acceptor of the active site. 2 residues coordinate Mg(2+): N271 and D280. Residue D280 coordinates ATP.

This sequence belongs to the SELO family. It depends on Mg(2+) as a cofactor. Mn(2+) serves as cofactor.

It carries out the reaction L-seryl-[protein] + ATP = 3-O-(5'-adenylyl)-L-seryl-[protein] + diphosphate. It catalyses the reaction L-threonyl-[protein] + ATP = 3-O-(5'-adenylyl)-L-threonyl-[protein] + diphosphate. The catalysed reaction is L-tyrosyl-[protein] + ATP = O-(5'-adenylyl)-L-tyrosyl-[protein] + diphosphate. The enzyme catalyses L-histidyl-[protein] + UTP = N(tele)-(5'-uridylyl)-L-histidyl-[protein] + diphosphate. It carries out the reaction L-seryl-[protein] + UTP = O-(5'-uridylyl)-L-seryl-[protein] + diphosphate. It catalyses the reaction L-tyrosyl-[protein] + UTP = O-(5'-uridylyl)-L-tyrosyl-[protein] + diphosphate. Nucleotidyltransferase involved in the post-translational modification of proteins. It can catalyze the addition of adenosine monophosphate (AMP) or uridine monophosphate (UMP) to a protein, resulting in modifications known as AMPylation and UMPylation. This chain is Protein nucleotidyltransferase YdiU, found in Xanthomonas oryzae pv. oryzae (strain MAFF 311018).